The chain runs to 307 residues: 4-hydroxy-tetrahydrodipicolinate synthase (307 aa).

Residue serine 57 participates in pyruvate binding. Tyrosine 145 (proton donor/acceptor) is an active-site residue. Lysine 173 (schiff-base intermediate with substrate) is an active-site residue. Isoleucine 219 provides a ligand contact to pyruvate.

It belongs to the DapA family. Homotetramer; dimer of dimers.

The protein localises to the cytoplasm. It carries out the reaction L-aspartate 4-semialdehyde + pyruvate = (2S,4S)-4-hydroxy-2,3,4,5-tetrahydrodipicolinate + H2O + H(+). The protein operates within amino-acid biosynthesis; L-lysine biosynthesis via DAP pathway; (S)-tetrahydrodipicolinate from L-aspartate: step 3/4. In terms of biological role, catalyzes the condensation of (S)-aspartate-beta-semialdehyde [(S)-ASA] and pyruvate to 4-hydroxy-tetrahydrodipicolinate (HTPA). The protein is 4-hydroxy-tetrahydrodipicolinate synthase of Polynucleobacter asymbioticus (strain DSM 18221 / CIP 109841 / QLW-P1DMWA-1) (Polynucleobacter necessarius subsp. asymbioticus).